The following is an 85-amino-acid chain: Phosphocarrier protein HPr (85 aa).

Positions 1 to 85 constitute an HPr domain; that stretch reads MYEKQVEITA…HLVALMDQLH (85 aa). Histidine 15 acts as the Pros-phosphohistidine intermediate in catalysis.

It belongs to the HPr family.

The protein localises to the cytoplasm. Its function is as follows. General (non sugar-specific) component of the phosphoenolpyruvate-dependent sugar phosphotransferase system (sugar PTS). This major carbohydrate active-transport system catalyzes the phosphorylation of incoming sugar substrates concomitantly with their translocation across the cell membrane. The phosphoryl group from phosphoenolpyruvate (PEP) is transferred to the phosphoryl carrier protein HPr by enzyme I. Phospho-HPr then transfers it to the PTS EIIA domain. The sequence is that of Phosphocarrier protein HPr (ptsH) from Vibrio cholerae serotype O1 (strain ATCC 39315 / El Tor Inaba N16961).